Reading from the N-terminus, the 347-residue chain is Protein RecA (347 aa).

Residue 80–87 participates in ATP binding; sequence GPESSGKT.

Belongs to the RecA family.

The protein localises to the cytoplasm. Functionally, can catalyze the hydrolysis of ATP in the presence of single-stranded DNA, the ATP-dependent uptake of single-stranded DNA by duplex DNA, and the ATP-dependent hybridization of homologous single-stranded DNAs. It interacts with LexA causing its activation and leading to its autocatalytic cleavage. The protein is Protein RecA of Chlorobaculum parvum (strain DSM 263 / NCIMB 8327) (Chlorobium vibrioforme subsp. thiosulfatophilum).